A 312-amino-acid polypeptide reads, in one-letter code: tRNA-cytidine(32) 2-sulfurtransferase (312 aa).

Positions 47 to 52 (SGGKDS) match the PP-loop motif motif. Residues C122, C125, and C213 each coordinate [4Fe-4S] cluster.

This sequence belongs to the TtcA family. In terms of assembly, homodimer. Mg(2+) serves as cofactor. Requires [4Fe-4S] cluster as cofactor.

It is found in the cytoplasm. It catalyses the reaction cytidine(32) in tRNA + S-sulfanyl-L-cysteinyl-[cysteine desulfurase] + AH2 + ATP = 2-thiocytidine(32) in tRNA + L-cysteinyl-[cysteine desulfurase] + A + AMP + diphosphate + H(+). It functions in the pathway tRNA modification. In terms of biological role, catalyzes the ATP-dependent 2-thiolation of cytidine in position 32 of tRNA, to form 2-thiocytidine (s(2)C32). The sulfur atoms are provided by the cysteine/cysteine desulfurase (IscS) system. This chain is tRNA-cytidine(32) 2-sulfurtransferase, found in Shewanella frigidimarina (strain NCIMB 400).